The sequence spans 415 residues: Adipocyte plasma membrane-associated protein (415 aa).

The interval 1 to 29 (MSEADGLRQRRPLRPQVVTDDGQVPEVKE) is disordered. S2 bears the N-acetylserine mark. The Cytoplasmic segment spans residues 2 to 39 (SEADGLRQRRPLRPQVVTDDGQVPEVKEGSSFSGRVFR). A Phosphothreonine modification is found at T19. The helical; Signal-anchor for type II membrane protein transmembrane segment at 40 to 60 (MTFLMLAVSLAIPLLGAMMLL) threads the bilayer. Residues 61–415 (ESPIDPQSFS…FICRLSLQSI (355 aa)) are Extracellular-facing. N-linked (GlcNAc...) asparagine glycosylation occurs at N159.

This sequence belongs to the strictosidine synthase family. In terms of processing, glycosylated in vitro. As to expression, strongly expressed in adipose tissue. Highly expressed in liver, heart, and kidney. Expressed at intermediate level in brain and lung. Weakly expressed in spleen, skeletal muscle and testis.

It is found in the membrane. Functionally, exhibits strong arylesterase activity with beta-naphthyl acetate and phenyl acetate. May play a role in adipocyte differentiation. The protein is Adipocyte plasma membrane-associated protein (Apmap) of Mus musculus (Mouse).